A 7639-amino-acid chain; its full sequence is Nonribosomal peptide synthetase 4 (7639 aa).

The adenylation 1 stretch occupies residues 244–636 (WQGAMRPDAE…AGRKDAQIKF (393 aa)). Positions 776–852 (TFSNGTESQL…ALARHVKEIE (77 aa)) constitute a Carrier 1 domain. Residue Ser813 is modified to O-(pantetheine 4'-phosphoryl)serine. The interval 865–1295 (FELSPIQRLY…EQNLSLLVES (431 aa)) is epimerization 1. The tract at residues 1337–1767 (VEDIYPCSPM…HLGPRHHQQI (431 aa)) is condensation 1. Positions 1786–2181 (FEEQAILRPE…FGRKDTQVKL (396 aa)) are adenylation 2. Positions 2313-2389 (APASDMEKQL…DMAQSALPLS (77 aa)) constitute a Carrier 2 domain. The residue at position 2350 (Ser2350) is an O-(pantetheine 4'-phosphoryl)serine. Residues 2426–2852 (VEDIYPCTPL…LISTRDYQSL (427 aa)) are condensation 2. An adenylation 3 region spans residues 2878–3269 (QPLDKLAVCA…QGRKDNQVKI (392 aa)). In terms of domain architecture, Carrier 3 spans 3403 to 3479 (REATETETKL…KLASFVQAVE (77 aa)). Ser3440 is subject to O-(pantetheine 4'-phosphoryl)serine. The tract at residues 3491 to 3928 (AFPLSPIQKL…RMTQAKAEPQ (438 aa)) is epimerization 2. Residues 3961-4389 (EAVYPCSPVQ…VSDDCAQQLT (429 aa)) are condensation 3. The segment at 4407 to 4810 (FERNVQSLPH…VSRKDTQIKL (404 aa)) is adenylation 4. In terms of domain architecture, Carrier 4 spans 4944–5020 (APTTMMQRKL…EMATCCGHSE (77 aa)). O-(pantetheine 4'-phosphoryl)serine is present on Ser4981. The interval 5058 to 5478 (QDLYPCSSLQ…QFCSEEDLQM (421 aa)) is condensation 4. Positions 5498–5900 (FWQSVATYHD…IGRKDNQVKL (403 aa)) are adenylation 5. The Carrier 5 domain maps to 6039–6115 (TDTTFVGQLL…DLVTLIEKEG (77 aa)). Residue Ser6076 is modified to O-(pantetheine 4'-phosphoryl)serine. The interval 6133–6567 (FALSPIQQLF…EVLGNMAMEL (435 aa)) is epimerization 3. Residues 6607–7032 (VEDMYPCSPM…EALSHLRVSQ (426 aa)) are condensation 5. The Carrier 6 domain maps to 7088-7164 (RDKDQVYNKL…TLLNCLRDKS (77 aa)). The residue at position 7125 (Ser7125) is an O-(pantetheine 4'-phosphoryl)serine. Residues 7254 to 7603 (LDGEGPLDVA…SNTEVCFLYR (350 aa)) form a condensation 6 region.

The protein belongs to the NRP synthetase family.

The catalysed reaction is D-allo-threonine + D-leucine + D-alanine + L-proline + 2 L-leucine + A = fusahexin + AH2 + 6 H2O. Its pathway is secondary metabolite biosynthesis. Its function is as follows. Nonribosomal peptide synthetase; part of the gene cluster that mediates the biosynthesis of the fusahexin, a cyclic hydrophobic hexapeptide with the amino acid sequence cyclo-(D-Ala-L-Leu-D-allo-Thr-L-Pro-D-Leu-L-Leu) that plays an important role in cell surface hydrophobicity. Fusahexin might also play a role in virulence, sensitivity to osmotic stress and oxidative stress. NRPS4 is the only enzyme within the cluster and its 5 catalytic modules are sufficient to produce fusahexin. The modules 1 to 4 incorporate respectively D-alanine, L-leucine, D-allo-threonine, and L-proline, which is supported by the presence of epimerase domains in modules 1 and 3, which incorporate D-amino acids. The terminal module is responsible for incorporation of the two adjacent leucine units, where the epimerase domain is only used to convert the first unit to D-leucine. The terminal condensation domain (Ct) is involved in cyclization with D-alanine and thereby releasing of fusahexin. The sequence is that of Nonribosomal peptide synthetase 4 from Gibberella zeae (strain ATCC MYA-4620 / CBS 123657 / FGSC 9075 / NRRL 31084 / PH-1) (Wheat head blight fungus).